The following is a 375-amino-acid chain: Trichodiene synthase (375 aa).

It belongs to the trichodiene synthase family.

It catalyses the reaction (2E,6E)-farnesyl diphosphate = trichodiene + diphosphate. It functions in the pathway sesquiterpene biosynthesis; trichothecene biosynthesis. Functionally, TS is a member of the terpene cyclase group of enzymes. It catalyzes the isomerization and cyclization of farnesyl pyro-phosphate to form trichodiene, the first cyclic intermediate in the biosynthetic pathway for trichothecenes. It serves to branch trichothecene biosynthesis from the isoprenoid pathway. The chain is Trichodiene synthase (TRI5) from Fusarium cortaderiae.